An 881-amino-acid chain; its full sequence is Valine--tRNA ligase (881 aa).

Positions 48-58 (PNITGKLHLGH) match the 'HIGH' region motif. Positions 527-531 (KMSKS) match the 'KMSKS' region motif. Lys530 serves as a coordination point for ATP. 2 coiled-coil regions span residues 721-747 (KNET…AEMN) and 811-881 (LLDL…AALK).

The protein belongs to the class-I aminoacyl-tRNA synthetase family. ValS type 1 subfamily. As to quaternary structure, monomer.

Its subcellular location is the cytoplasm. The enzyme catalyses tRNA(Val) + L-valine + ATP = L-valyl-tRNA(Val) + AMP + diphosphate. Functionally, catalyzes the attachment of valine to tRNA(Val). As ValRS can inadvertently accommodate and process structurally similar amino acids such as threonine, to avoid such errors, it has a 'posttransfer' editing activity that hydrolyzes mischarged Thr-tRNA(Val) in a tRNA-dependent manner. This Clostridium acetobutylicum (strain ATCC 824 / DSM 792 / JCM 1419 / IAM 19013 / LMG 5710 / NBRC 13948 / NRRL B-527 / VKM B-1787 / 2291 / W) protein is Valine--tRNA ligase.